We begin with the raw amino-acid sequence, 408 residues long: Probable fructose-2,6-bisphosphatase C732.02c (408 aa).

Position 16–24 (16–24) interacts with ATP; the sequence is GLPASGKTS. Asp88 is an active-site residue. 127-132 contacts ATP; the sequence is NITDMC. Tyr157 serves as a coordination point for beta-D-fructose 6-phosphate. Position 213 (Arg213) interacts with beta-D-fructose 2,6-bisphosphate. Residue His214 is the Tele-phosphohistidine intermediate of the active site. Residues Asn220 and Gly226 each coordinate beta-D-fructose 2,6-bisphosphate. Glu285 (proton donor/acceptor) is an active-site residue. Tyr296, Arg310, Lys314, Tyr325, Gln351, and Arg355 together coordinate beta-D-fructose 2,6-bisphosphate. Position 307-310 (307-310) interacts with ATP; that stretch reads AELR. ATP is bound by residues 351–355 and Tyr387; that span reads QAILR.

The protein in the C-terminal section; belongs to the phosphoglycerate mutase family.

The catalysed reaction is beta-D-fructose 2,6-bisphosphate + H2O = beta-D-fructose 6-phosphate + phosphate. Functionally, this is predominantly if not solely a fructose-2,6-bisphosphatase. The chain is Probable fructose-2,6-bisphosphatase C732.02c from Schizosaccharomyces pombe (strain 972 / ATCC 24843) (Fission yeast).